Here is a 384-residue protein sequence, read N- to C-terminus: Acetylgalactosaminyl-O-glycosyl-glycoprotein beta-1,3-N-acetylglucosaminyltransferase (384 aa).

Residues 1 to 12 (MAFPCRRSLTAK) are Cytoplasmic-facing. Residues 13–31 (TLACLLVGVSFLALQQWFL) traverse the membrane as a helical; Signal-anchor for type II membrane protein segment. The Lumenal portion of the chain corresponds to 32–384 (QAPRSPREER…LSCDRGHRVS (353 aa)). Positions 34–68 (PRSPREERSPQEETPEGPTDAPAADEPPSELVPGP) are disordered. 3 N-linked (GlcNAc...) asparagine glycosylation sites follow: Asn73, Asn77, and Asn196.

Belongs to the glycosyltransferase 31 family. Present in stomach and colon (at protein level). Restricted in the stomach, colon and small intestine, where core 3 structure is present.

The protein resides in the golgi apparatus membrane. The enzyme catalyses a 3-O-[N-acetyl-alpha-D-galactosaminyl]-L-threonyl-[protein] + UDP-N-acetyl-alpha-D-glucosamine = a 3-O-[N-acetyl-beta-D-glucosaminyl-(1-&gt;3)-N-acetyl-alpha-D-galactosaminyl]-L-threonyl-[protein] + UDP + H(+). It catalyses the reaction a 3-O-[N-acetyl-alpha-D-galactosaminyl]-L-seryl-[protein] + UDP-N-acetyl-alpha-D-glucosamine = 3-O-[N-acetyl-beta-D-glucosaminyl-(1-&gt;3)-N-acetyl-alpha-D-galactosaminyl]-L-seryl-[protein] + UDP + H(+). The protein operates within protein modification; protein glycosylation. Its function is as follows. Beta-1,3-N-acetylglucosaminyltransferase that synthesizes the core 3 structure of the O-glycan, an important precursor in the biosynthesis of mucin-type glycoproteins. Plays an important role in the synthesis of mucin-type O-glycans in digestive organs. The chain is Acetylgalactosaminyl-O-glycosyl-glycoprotein beta-1,3-N-acetylglucosaminyltransferase (B3GNT6) from Homo sapiens (Human).